Here is a 605-residue protein sequence, read N- to C-terminus: uncharacterized protein (605 aa).

Disordered regions lie at residues Arg-10–Ala-78 and Arg-216–Pro-248. Residues Ala-20–Gly-48 are compositionally biased toward low complexity. A compositionally biased stretch (pro residues) spans Cys-220 to Arg-233.

This is an uncharacterized protein from Dryophytes versicolor (chameleon treefrog).